We begin with the raw amino-acid sequence, 177 residues long: Thymidine kinase (177 aa).

Residue 11–18 participates in ATP binding; that stretch reads GPMFSGKS. The active-site Proton acceptor is E83. Residue F113 participates in substrate binding. Positions 138 and 141 each coordinate Zn(2+). Residue 157–161 participates in substrate binding; sequence IELIG. Residues C170 and C173 each contribute to the Zn(2+) site.

This sequence belongs to the thymidine kinase family.

It carries out the reaction thymidine + ATP = dTMP + ADP + H(+). This is Thymidine kinase (TK) from Sheeppox virus (strain KS-1) (SPPV).